Consider the following 586-residue polypeptide: Putative butyrophilin subfamily 2 member A3 (586 aa).

The signal sequence occupies residues 1–27; that stretch reads MEPAAALHFSRPASLLLLLSLCALVSA. The 112-residue stretch at 28–139 folds into the Ig-like V-type domain; that stretch reads QVTVVGPTDP…SCNEAILHLV (112 aa). Topologically, residues 28–246 are extracellular; it reads QVTVVGPTDP…SFMPSRSPCV (219 aa). Asn-45, Asn-112, Asn-214, and Asn-220 each carry an N-linked (GlcNAc...) asparagine glycan. Cys-50 and Cys-123 form a disulfide bridge. Residues 247-267 traverse the membrane as a helical segment; that stretch reads VILPVIMIILMIPIAICIYWI. Residues 268-586 are Cytoplasmic-facing; sequence NNLQKEKKDS…VPQLPARKKV (319 aa). The B30.2/SPRY domain maps to 281–474; sequence TFNLCLSLAG…ILICSAFTGA (194 aa).

This sequence belongs to the immunoglobulin superfamily. BTN/MOG family.

It localises to the membrane. The protein is Putative butyrophilin subfamily 2 member A3 (BTN2A3P) of Homo sapiens (Human).